The following is a 447-amino-acid chain: Argininosuccinate synthase (447 aa).

ATP contacts are provided by residues Ala-17–Ser-25 and Ala-43. Position 99 (Tyr-99) interacts with L-citrulline. The ATP site is built by Gly-129 and Thr-131. Residues Thr-131, Asn-135, and Asp-136 each coordinate L-aspartate. Asn-135 lines the L-citrulline pocket. Asp-136 provides a ligand contact to ATP. Positions 139 and 192 each coordinate L-citrulline. Residue Asp-194 coordinates ATP. Positions 201, 203, and 280 each coordinate L-citrulline.

Belongs to the argininosuccinate synthase family. Type 2 subfamily. In terms of assembly, homotetramer.

Its subcellular location is the cytoplasm. It carries out the reaction L-citrulline + L-aspartate + ATP = 2-(N(omega)-L-arginino)succinate + AMP + diphosphate + H(+). It functions in the pathway amino-acid biosynthesis; L-arginine biosynthesis; L-arginine from L-ornithine and carbamoyl phosphate: step 2/3. The polypeptide is Argininosuccinate synthase (Salmonella schwarzengrund (strain CVM19633)).